A 211-amino-acid chain; its full sequence is uncharacterized protein (211 aa).

The stretch at 105 to 143 (IEENEFDKVRKSSDKLINEIEKTKSSLREDVKTALSEVR) forms a coiled coil. Residues 191-211 (QWFTGFVGVVSSVVLIILFYF) form a helical membrane-spanning segment.

This sequence belongs to the CCDC90 family.

The protein resides in the mitochondrion. It is found in the membrane. This is an uncharacterized protein from Schizosaccharomyces pombe (strain 972 / ATCC 24843) (Fission yeast).